Here is a 299-residue protein sequence, read N- to C-terminus: Peroxisomal biogenesis factor 19 (299 aa).

A disordered region spans residues 1–63; sequence MAAAEEGCSV…SPGDTAKDAL (63 aa). At Ala2 the chain carries N-acetylalanine. The docking to the peroxisome membrane and binding to PEX3 stretch occupies residues 2–56; that stretch reads AAAEEGCSVGAEADRELEELLESALDDFDKAKPSPAPPSTTTAPDASGPQKRSPG. The necessary for PEX19 function on peroxisome biogenesis stretch occupies residues 2–91; the sequence is AAAEEGCSVG…QATAEFEKAM (90 aa). A compositionally biased stretch (acidic residues) spans 16–27; that stretch reads RELEELLESALD. Ser35, Ser54, and Ser66 each carry phosphoserine. Thr236 is subject to Phosphothreonine. Cys296 carries the cysteine methyl ester modification. Residue Cys296 is the site of S-farnesyl cysteine attachment. A propeptide spans 297–299 (removed in mature form); it reads LIM.

It belongs to the peroxin-19 family. In terms of assembly, interacts with a broad range of peroxisomal membrane proteins, including PEX3, PEX10, PEX11A, PEX11B, PEX12, PEX13, PEX14 and PEX16, PXMP2/PMP22, PXMP4/PMP24, SLC25A17/PMP34, ABCD1/ALDP, ABCD2/ALDRP, and ABCD3/PMP70. Also interacts with the tumor suppressor CDKN2A/p19ARF. (Microbial infection) Interacts with human cytomegalovirus protein UL37 isoform vMIA; this interaction inhibits the peroxisomal-dependent antiviral signaling. As to expression, ubiquitously expressed. Isoform 1 is strongly predominant in all tissues except in utero where isoform 2 is the main form.

The protein resides in the cytoplasm. It localises to the peroxisome membrane. Functionally, necessary for early peroxisomal biogenesis. Acts both as a cytosolic chaperone and as an import receptor for peroxisomal membrane proteins (PMPs). Binds and stabilizes newly synthesized PMPs in the cytoplasm by interacting with their hydrophobic membrane-spanning domains, and targets them to the peroxisome membrane by binding to the integral membrane protein PEX3. Excludes CDKN2A from the nucleus and prevents its interaction with MDM2, which results in active degradation of TP53. The chain is Peroxisomal biogenesis factor 19 from Homo sapiens (Human).